Consider the following 331-residue polypeptide: UPF0194 membrane protein YbhG (331 aa).

The first 19 residues, 1 to 19, serve as a signal peptide directing secretion; the sequence is MKKPVVIGLAIAAIVAVIA. Residues 107–208 adopt a coiled-coil conformation; that stretch reads EEIAQAAAAV…LDLQDTTLIA (102 aa).

This sequence belongs to the UPF0194 family.

The protein localises to the periplasm. The sequence is that of UPF0194 membrane protein YbhG from Salmonella heidelberg (strain SL476).